The primary structure comprises 726 residues: Dipeptidyl-peptidase 5 (726 aa).

A signal peptide spans 1-19; that stretch reads MAAAKWLIASLAFASSGLA. Residues Asn96 and Asn252 are each glycosylated (N-linked (GlcNAc...) asparagine). Residues 269–291 form a disordered region; sequence AEPINKRNGPRTPQGIEGASSSP. Ser558 serves as the catalytic Charge relay system. Residue Asn605 is glycosylated (N-linked (GlcNAc...) asparagine). Active-site charge relay system residues include Asp641 and His673. Residue Asn699 is glycosylated (N-linked (GlcNAc...) asparagine).

This sequence belongs to the peptidase S9C family.

It is found in the secreted. In Arthroderma benhamiae (Trichophyton mentagrophytes), this protein is Dipeptidyl-peptidase 5 (DPPV).